The following is a 310-amino-acid chain: Methionyl-tRNA formyltransferase (310 aa).

114–117 lines the (6S)-5,6,7,8-tetrahydrofolate pocket; it reads SLLP.

This sequence belongs to the Fmt family.

It carries out the reaction L-methionyl-tRNA(fMet) + (6R)-10-formyltetrahydrofolate = N-formyl-L-methionyl-tRNA(fMet) + (6S)-5,6,7,8-tetrahydrofolate + H(+). Attaches a formyl group to the free amino group of methionyl-tRNA(fMet). The formyl group appears to play a dual role in the initiator identity of N-formylmethionyl-tRNA by promoting its recognition by IF2 and preventing the misappropriation of this tRNA by the elongation apparatus. The sequence is that of Methionyl-tRNA formyltransferase from Granulibacter bethesdensis (strain ATCC BAA-1260 / CGDNIH1).